The primary structure comprises 339 residues: Undecaprenyl-phosphate 4-deoxy-4-formamido-L-arabinose transferase (339 aa).

The next 2 helical transmembrane spans lie at 235-255 and 269-289; these read LSLV…FLLV and LFVL…GMGL.

The protein belongs to the glycosyltransferase 2 family.

The protein resides in the cell inner membrane. It carries out the reaction UDP-4-deoxy-4-formamido-beta-L-arabinose + di-trans,octa-cis-undecaprenyl phosphate = 4-deoxy-4-formamido-alpha-L-arabinopyranosyl di-trans,octa-cis-undecaprenyl phosphate + UDP. It functions in the pathway glycolipid biosynthesis; 4-amino-4-deoxy-alpha-L-arabinose undecaprenyl phosphate biosynthesis; 4-amino-4-deoxy-alpha-L-arabinose undecaprenyl phosphate from UDP-4-deoxy-4-formamido-beta-L-arabinose and undecaprenyl phosphate: step 1/2. It participates in bacterial outer membrane biogenesis; lipopolysaccharide biosynthesis. Catalyzes the transfer of 4-deoxy-4-formamido-L-arabinose from UDP to undecaprenyl phosphate. The modified arabinose is attached to lipid A and is required for resistance to polymyxin and cationic antimicrobial peptides. This is Undecaprenyl-phosphate 4-deoxy-4-formamido-L-arabinose transferase from Pseudomonas aeruginosa (strain LESB58).